Here is a 438-residue protein sequence, read N- to C-terminus: Probable tRNA pseudouridine synthase D (438 aa).

Catalysis depends on Asp-86, which acts as the Nucleophile. In terms of domain architecture, TRUD spans Gly-165–Leu-390.

Belongs to the pseudouridine synthase TruD family.

It catalyses the reaction uridine(13) in tRNA = pseudouridine(13) in tRNA. Functionally, could be responsible for synthesis of pseudouridine from uracil-13 in transfer RNAs. The chain is Probable tRNA pseudouridine synthase D from Methanosarcina mazei (strain ATCC BAA-159 / DSM 3647 / Goe1 / Go1 / JCM 11833 / OCM 88) (Methanosarcina frisia).